Consider the following 170-residue polypeptide: Lipoprotein signal peptidase (170 aa).

3 consecutive transmembrane segments (helical) span residues 12–32, 67–87, and 94–116; these read WYWVVVLVFVADQLSKQWVLS, WQRWLFTFVAVGFSVVLSVWL, and MWRLNLAYTLVIGGALGNLIDRL. Catalysis depends on residues aspartate 123 and aspartate 141. The chain crosses the membrane as a helical span at residues 133-153; it reads HFPAFNIADSAICVGAALIIL.

It belongs to the peptidase A8 family.

The protein localises to the cell inner membrane. The enzyme catalyses Release of signal peptides from bacterial membrane prolipoproteins. Hydrolyzes -Xaa-Yaa-Zaa-|-(S,diacylglyceryl)Cys-, in which Xaa is hydrophobic (preferably Leu), and Yaa (Ala or Ser) and Zaa (Gly or Ala) have small, neutral side chains.. It participates in protein modification; lipoprotein biosynthesis (signal peptide cleavage). Its function is as follows. This protein specifically catalyzes the removal of signal peptides from prolipoproteins. This chain is Lipoprotein signal peptidase, found in Shewanella halifaxensis (strain HAW-EB4).